The primary structure comprises 153 residues: Large ribosomal subunit protein bL9 (153 aa).

Belongs to the bacterial ribosomal protein bL9 family.

In terms of biological role, binds to the 23S rRNA. This Micrococcus luteus (strain ATCC 4698 / DSM 20030 / JCM 1464 / CCM 169 / CCUG 5858 / IAM 1056 / NBRC 3333 / NCIMB 9278 / NCTC 2665 / VKM Ac-2230) (Micrococcus lysodeikticus) protein is Large ribosomal subunit protein bL9.